Consider the following 254-residue polypeptide: tRNA (guanine-N(1)-)-methyltransferase (254 aa).

S-adenosyl-L-methionine contacts are provided by residues G112 and 131–136 (IGDFIL).

It belongs to the RNA methyltransferase TrmD family. In terms of assembly, homodimer.

Its subcellular location is the cytoplasm. The enzyme catalyses guanosine(37) in tRNA + S-adenosyl-L-methionine = N(1)-methylguanosine(37) in tRNA + S-adenosyl-L-homocysteine + H(+). Its function is as follows. Specifically methylates guanosine-37 in various tRNAs. The sequence is that of tRNA (guanine-N(1)-)-methyltransferase from Persephonella marina (strain DSM 14350 / EX-H1).